We begin with the raw amino-acid sequence, 193 residues long: ATP synthase subunit delta (193 aa).

This sequence belongs to the ATPase delta chain family. F-type ATPases have 2 components, F(1) - the catalytic core - and F(0) - the membrane proton channel. F(1) has five subunits: alpha(3), beta(3), gamma(1), delta(1), epsilon(1). F(0) has three main subunits: a(1), b(2) and c(10-14). The alpha and beta chains form an alternating ring which encloses part of the gamma chain. F(1) is attached to F(0) by a central stalk formed by the gamma and epsilon chains, while a peripheral stalk is formed by the delta and b chains.

The protein resides in the cell inner membrane. F(1)F(0) ATP synthase produces ATP from ADP in the presence of a proton or sodium gradient. F-type ATPases consist of two structural domains, F(1) containing the extramembraneous catalytic core and F(0) containing the membrane proton channel, linked together by a central stalk and a peripheral stalk. During catalysis, ATP synthesis in the catalytic domain of F(1) is coupled via a rotary mechanism of the central stalk subunits to proton translocation. Functionally, this protein is part of the stalk that links CF(0) to CF(1). It either transmits conformational changes from CF(0) to CF(1) or is implicated in proton conduction. This Allorhizobium ampelinum (strain ATCC BAA-846 / DSM 112012 / S4) (Agrobacterium vitis (strain S4)) protein is ATP synthase subunit delta.